Here is a 394-residue protein sequence, read N- to C-terminus: Lipoyl synthase, chloroplastic (394 aa).

Residues 1-36 constitute a chloroplast transit peptide; sequence MMHHCSITKPTFSISISTQKLHHHSSKFLNLGFRIR. The [4Fe-4S] cluster site is built by C127, C132, C138, C158, C162, C165, and S373. Residues 141 to 362 enclose the Radical SAM core domain; it reads GGGDGVATAT…KTYGESIGFR (222 aa).

Belongs to the radical SAM superfamily. Lipoyl synthase family. Requires [4Fe-4S] cluster as cofactor. In terms of tissue distribution, expressed in roots, leaves and flowers.

It localises to the plastid. Its subcellular location is the chloroplast. It carries out the reaction [[Fe-S] cluster scaffold protein carrying a second [4Fe-4S](2+) cluster] + N(6)-octanoyl-L-lysyl-[protein] + 2 oxidized [2Fe-2S]-[ferredoxin] + 2 S-adenosyl-L-methionine + 4 H(+) = [[Fe-S] cluster scaffold protein] + N(6)-[(R)-dihydrolipoyl]-L-lysyl-[protein] + 4 Fe(3+) + 2 hydrogen sulfide + 2 5'-deoxyadenosine + 2 L-methionine + 2 reduced [2Fe-2S]-[ferredoxin]. The protein operates within protein modification; protein lipoylation via endogenous pathway; protein N(6)-(lipoyl)lysine from octanoyl-[acyl-carrier-protein]: step 2/2. Catalyzes the radical-mediated insertion of two sulfur atoms into the C-6 and C-8 positions of the octanoyl moiety bound to the lipoyl domains of lipoate-dependent enzymes, thereby converting the octanoylated domains into lipoylated derivatives. Together with LIP2P and LIP2P2 is essential for de novo plastidial protein lipoylation during seed development. This chain is Lipoyl synthase, chloroplastic, found in Arabidopsis thaliana (Mouse-ear cress).